The following is a 75-amino-acid chain: MDLVALKFIAIGLSVLGILGAGLGVANIFSTMLSGLARNPESEGKMKIYVYVGAGMVEFTGLLAFVLAMLLMFVA.

2 helical membrane-spanning segments follow: residues 8-28 (FIAI…VANI) and 54-74 (AGMV…LMFV).

It belongs to the ATPase C chain family. F-type ATPases have 2 components, F(1) - the catalytic core - and F(0) - the membrane proton channel. F(1) has five subunits: alpha(3), beta(3), gamma(1), delta(1), epsilon(1). F(0) has three main subunits: a(1), b(2) and c(10-14). The alpha and beta chains form an alternating ring which encloses part of the gamma chain. F(1) is attached to F(0) by a central stalk formed by the gamma and epsilon chains, while a peripheral stalk is formed by the delta and b chains.

It localises to the cell membrane. Functionally, f(1)F(0) ATP synthase produces ATP from ADP in the presence of a proton or sodium gradient. F-type ATPases consist of two structural domains, F(1) containing the extramembraneous catalytic core and F(0) containing the membrane proton channel, linked together by a central stalk and a peripheral stalk. During catalysis, ATP synthesis in the catalytic domain of F(1) is coupled via a rotary mechanism of the central stalk subunits to proton translocation. In terms of biological role, key component of the F(0) channel; it plays a direct role in translocation across the membrane. A homomeric c-ring of between 10-14 subunits forms the central stalk rotor element with the F(1) delta and epsilon subunits. The protein is ATP synthase subunit c of Wolbachia sp. subsp. Brugia malayi (strain TRS).